The sequence spans 180 residues: MRMRMQDVAPQDYRDAMACLGAAVNIVTTDGSAGRAGFTASAICSVTDDPPTLLVCINRGSSAYSSVTRNEVVCVNVLSARHEPLSRLFGGKVPADERFAAAAWSTLATGAPVLADCSAAFDCRIADTVNVGTHDVLFCRVVALQRFGCTDNLIYFGRAYHTVGVTDPAEAGPESALDAS.

The protein belongs to the non-flavoprotein flavin reductase family. RutF subfamily.

The enzyme catalyses FMNH2 + NAD(+) = FMN + NADH + 2 H(+). Its function is as follows. Catalyzes the reduction of FMN to FMNH2 which is used to reduce pyrimidine by RutA via the Rut pathway. The protein is FMN reductase (NADH) RutF of Bradyrhizobium diazoefficiens (strain JCM 10833 / BCRC 13528 / IAM 13628 / NBRC 14792 / USDA 110).